The sequence spans 95 residues: FXYD domain-containing ion transport regulator 6 (95 aa).

Positions Met-1 to Ala-18 are cleaved as a signal peptide. Residues Ser-19–Gln-35 are Extracellular-facing. A helical transmembrane segment spans residues Thr-36 to Ser-58. Topologically, residues Arg-59–Asn-95 are cytoplasmic.

The protein belongs to the FXYD family. In terms of assembly, regulatory subunit of the sodium/potassium-transporting ATPase which is composed of a catalytic alpha subunit, a non-catalytic beta subunit and an additional regulatory subunit. The regulatory subunit, a member of the FXYD protein family, modulates the enzymatic activity in a tissue- and isoform-specific way by changing affinities of the Na+/K+-ATPase toward Na(+), K(+) or ATP.

It is found in the cell membrane. Associates with and regulates the activity of the sodium/potassium-transporting ATPase (NKA) which catalyzes the hydrolysis of ATP coupled with the exchange of Na(+) and K(+) ions across the plasma membrane. Reduces the apparent affinity for intracellular Na(+) with no change in the apparent affinity for extracellular K(+). In addition to modulating NKA kinetics, may also function as a regulator of NKA localization to the plasma membrane. In Macaca fascicularis (Crab-eating macaque), this protein is FXYD domain-containing ion transport regulator 6 (FXYD6).